A 427-amino-acid polypeptide reads, in one-letter code: Glutamate-1-semialdehyde 2,1-aminomutase (427 aa).

The residue at position 265 (Lys265) is an N6-(pyridoxal phosphate)lysine.

Belongs to the class-III pyridoxal-phosphate-dependent aminotransferase family. HemL subfamily. Homodimer. Requires pyridoxal 5'-phosphate as cofactor.

The protein resides in the cytoplasm. The enzyme catalyses (S)-4-amino-5-oxopentanoate = 5-aminolevulinate. The protein operates within porphyrin-containing compound metabolism; protoporphyrin-IX biosynthesis; 5-aminolevulinate from L-glutamyl-tRNA(Glu): step 2/2. This Pseudomonas aeruginosa (strain LESB58) protein is Glutamate-1-semialdehyde 2,1-aminomutase.